The primary structure comprises 162 residues: NADH-quinone oxidoreductase subunit I (162 aa).

4Fe-4S ferredoxin-type domains follow at residues 52–82 (LRRY…IEAG) and 93–122 (TRYD…EGPN). [4Fe-4S] cluster is bound by residues Cys-62, Cys-65, Cys-68, Cys-72, Cys-102, Cys-105, Cys-108, and Cys-112.

The protein belongs to the complex I 23 kDa subunit family. As to quaternary structure, NDH-1 is composed of 14 different subunits. Subunits NuoA, H, J, K, L, M, N constitute the membrane sector of the complex. [4Fe-4S] cluster serves as cofactor.

It localises to the cell inner membrane. It carries out the reaction a quinone + NADH + 5 H(+)(in) = a quinol + NAD(+) + 4 H(+)(out). Functionally, NDH-1 shuttles electrons from NADH, via FMN and iron-sulfur (Fe-S) centers, to quinones in the respiratory chain. The immediate electron acceptor for the enzyme in this species is believed to be ubiquinone. Couples the redox reaction to proton translocation (for every two electrons transferred, four hydrogen ions are translocated across the cytoplasmic membrane), and thus conserves the redox energy in a proton gradient. This chain is NADH-quinone oxidoreductase subunit I, found in Azorhizobium caulinodans (strain ATCC 43989 / DSM 5975 / JCM 20966 / LMG 6465 / NBRC 14845 / NCIMB 13405 / ORS 571).